An 864-amino-acid chain; its full sequence is Mitochondrial 15S rRNA processing factor CCM1 (864 aa).

The N-terminal 76 residues, 1-76 (MYMARCGPKN…REFSNTLKER (76 aa)), are a transit peptide targeting the mitochondrion. 2 PPR repeats span residues 319-353 (NKQNLTTVIQFYSRKEMTKQAWNTFDTMKFLSTKH) and 356-390 (DICTYNTMLRICEKERNFPKALDLFQEIQDHNIKP).

The protein belongs to the CCM1 family. In terms of assembly, binds to mitochondrial small subunit 15S rRNA.

Its subcellular location is the mitochondrion. Its function is as follows. Regulates mitochondrial small subunit maturation by controlling 15S rRNA 5'-end processing. Localizes to the 5' precursor of the 15S rRNA in a position that is subsequently occupied by mS47 in the mature yeast mtSSU. Uses structure and sequence-specific RNA recognition, binding to a single-stranded region of the precursor and specifically recognizing bases -6 to -1. The exchange of Ccm1 for mS47 is coupled to the irreversible removal of precursor rRNA that is accompanied by conformational changes of the mitoribosomal proteins uS5m and mS26. These conformational changes signal completion of 5'-end rRNA processing through protection of the mature 5'-end of the 15S rRNA and stabilization of mS47. The removal of the 5' precursor together with the dissociation of Ccm1 may be catalyzed by the 5'-3' exoribonuclease Pet127. Involved in the specific removal of group I introns in mitochondrial encoded transcripts. This Saccharomyces cerevisiae (strain Lalvin EC1118 / Prise de mousse) (Baker's yeast) protein is Mitochondrial 15S rRNA processing factor CCM1 (CCM1).